A 251-amino-acid chain; its full sequence is 5'-nucleotidase SurE (251 aa).

4 residues coordinate a divalent metal cation: aspartate 8, aspartate 9, serine 39, and asparagine 91.

Belongs to the SurE nucleotidase family. A divalent metal cation serves as cofactor.

Its subcellular location is the cytoplasm. It carries out the reaction a ribonucleoside 5'-phosphate + H2O = a ribonucleoside + phosphate. Nucleotidase that shows phosphatase activity on nucleoside 5'-monophosphates. This Halorhodospira halophila (strain DSM 244 / SL1) (Ectothiorhodospira halophila (strain DSM 244 / SL1)) protein is 5'-nucleotidase SurE.